The chain runs to 303 residues: Probable 5-dehydro-4-deoxyglucarate dehydratase (303 aa).

Belongs to the DapA family.

It carries out the reaction 5-dehydro-4-deoxy-D-glucarate + H(+) = 2,5-dioxopentanoate + CO2 + H2O. The protein operates within carbohydrate acid metabolism; D-glucarate degradation; 2,5-dioxopentanoate from D-glucarate: step 2/2. In Delftia acidovorans (strain DSM 14801 / SPH-1), this protein is Probable 5-dehydro-4-deoxyglucarate dehydratase.